The sequence spans 339 residues: Phenylalanine--tRNA ligase alpha subunit (339 aa).

Glu-247 serves as a coordination point for Mg(2+).

This sequence belongs to the class-II aminoacyl-tRNA synthetase family. Phe-tRNA synthetase alpha subunit type 1 subfamily. Tetramer of two alpha and two beta subunits. It depends on Mg(2+) as a cofactor.

The protein localises to the cytoplasm. It carries out the reaction tRNA(Phe) + L-phenylalanine + ATP = L-phenylalanyl-tRNA(Phe) + AMP + diphosphate + H(+). This is Phenylalanine--tRNA ligase alpha subunit from Deinococcus deserti (strain DSM 17065 / CIP 109153 / LMG 22923 / VCD115).